Reading from the N-terminus, the 298-residue chain is Ribosomal RNA small subunit methyltransferase H (298 aa).

Residues 38–40, Asp57, Phe84, Asp100, and Gln107 contribute to the S-adenosyl-L-methionine site; that span reads GGH.

This sequence belongs to the methyltransferase superfamily. RsmH family.

The protein resides in the cytoplasm. The enzyme catalyses cytidine(1402) in 16S rRNA + S-adenosyl-L-methionine = N(4)-methylcytidine(1402) in 16S rRNA + S-adenosyl-L-homocysteine + H(+). Specifically methylates the N4 position of cytidine in position 1402 (C1402) of 16S rRNA. This Acaryochloris marina (strain MBIC 11017) protein is Ribosomal RNA small subunit methyltransferase H.